A 131-amino-acid chain; its full sequence is Peptide methionine sulfoxide reductase MsrB (131 aa).

Residues 8–130 (LEEWRAMLDP…NSVCLDLVPR (123 aa)) form the MsrB domain. Zn(2+) contacts are provided by C47, C50, C96, and C99. Catalysis depends on C119, which acts as the Nucleophile.

It belongs to the MsrB Met sulfoxide reductase family. Zn(2+) serves as cofactor.

The catalysed reaction is L-methionyl-[protein] + [thioredoxin]-disulfide + H2O = L-methionyl-(R)-S-oxide-[protein] + [thioredoxin]-dithiol. The chain is Peptide methionine sulfoxide reductase MsrB from Pseudomonas fluorescens (strain Pf0-1).